Reading from the N-terminus, the 525-residue chain is Putative ribose/galactose/methyl galactoside import ATP-binding protein (525 aa).

The tract at residues Met1–Pro30 is disordered. A compositionally biased stretch (low complexity) spans Asp14–Pro25. ABC transporter domains are found at residues Leu33–Glu269 and Lys279–Lys523. Gly65–Ser72 lines the ATP pocket.

It belongs to the ABC transporter superfamily. Carbohydrate importer 2 (CUT2) (TC 3.A.1.2) family.

It localises to the cell inner membrane. The catalysed reaction is D-ribose(out) + ATP + H2O = D-ribose(in) + ADP + phosphate + H(+). The enzyme catalyses D-galactose(out) + ATP + H2O = D-galactose(in) + ADP + phosphate + H(+). Part of an ABC transporter complex involved in carbohydrate import. Could be involved in ribose, galactose and/or methyl galactoside import. Responsible for energy coupling to the transport system. In Pseudomonas savastanoi pv. phaseolicola (strain 1448A / Race 6) (Pseudomonas syringae pv. phaseolicola (strain 1448A / Race 6)), this protein is Putative ribose/galactose/methyl galactoside import ATP-binding protein.